Reading from the N-terminus, the 237-residue chain is Ribonuclease PH (237 aa).

Phosphate is bound by residues arginine 86 and 124–126 (GTR).

It belongs to the RNase PH family. In terms of assembly, homohexameric ring arranged as a trimer of dimers.

The enzyme catalyses tRNA(n+1) + phosphate = tRNA(n) + a ribonucleoside 5'-diphosphate. Phosphorolytic 3'-5' exoribonuclease that plays an important role in tRNA 3'-end maturation. Removes nucleotide residues following the 3'-CCA terminus of tRNAs; can also add nucleotides to the ends of RNA molecules by using nucleoside diphosphates as substrates, but this may not be physiologically important. Probably plays a role in initiation of 16S rRNA degradation (leading to ribosome degradation) during starvation. This chain is Ribonuclease PH, found in Nitrobacter hamburgensis (strain DSM 10229 / NCIMB 13809 / X14).